The chain runs to 213 residues: Protein RCR1 (213 aa).

The Lumenal segment spans residues 1 to 39 (MGLISYENEAINEVKKADNHHVSKFVTSYYGPSSSSWQS). Residues 40–62 (GIWILFVLFVAAVILIILFTFVA) traverse the membrane as a helical segment. Residues 63 to 213 (NRRRRRMGRA…PERAKVNARS (151 aa)) are Cytoplasmic-facing. A PY motif motif is present at residues 104-107 (VPEY). Residues 190-213 (ERLPGGTTTQEINPPERAKVNARS) are disordered. The span at 203–213 (PPERAKVNARS) shows a compositional bias: basic and acidic residues.

In terms of assembly, interacts with PMT4 and WW domain of RSP5.

It localises to the endoplasmic reticulum membrane. In terms of biological role, regulates chitin deposition in the cell wall. This Saccharomyces cerevisiae (strain ATCC 204508 / S288c) (Baker's yeast) protein is Protein RCR1 (RCR1).